Consider the following 224-residue polypeptide: NBPF family member NBPF6-like protein (224 aa).

In terms of domain architecture, Olduvai spans 159-224 (ENHHDRKDEE…ASVCDVQDQL (66 aa)). Basic and acidic residues predominate over residues 198–209 (YLTHSSHHDSHR). Residues 198 to 224 (YLTHSSHHDSHRPPSSIASVCDVQDQL) are disordered.

Belongs to the NBPF family.

In Bos taurus (Bovine), this protein is NBPF family member NBPF6-like protein.